The primary structure comprises 514 residues: Peptide chain release factor 3 (514 aa).

The region spanning 8–268 (KKRRTFAIIS…TFLKFAPEPH (261 aa)) is the tr-type G domain. Residues 17 to 24 (SHPDAGKT), 85 to 89 (DTPGH), and 139 to 142 (NKLD) contribute to the GTP site.

The protein belongs to the TRAFAC class translation factor GTPase superfamily. Classic translation factor GTPase family. PrfC subfamily.

It is found in the cytoplasm. Functionally, increases the formation of ribosomal termination complexes and stimulates activities of RF-1 and RF-2. It binds guanine nucleotides and has strong preference for UGA stop codons. It may interact directly with the ribosome. The stimulation of RF-1 and RF-2 is significantly reduced by GTP and GDP, but not by GMP. The sequence is that of Peptide chain release factor 3 from Streptococcus pneumoniae (strain Hungary19A-6).